A 64-amino-acid polypeptide reads, in one-letter code: MPKAKTHSGASKRFRRTGTGKIVRQKANRRHLLEHKPSTRTRRLDGRTVVAANDTKRVTSLLNG.

The tract at residues 1–22 is disordered; the sequence is MPKAKTHSGASKRFRRTGTGKI.

This sequence belongs to the bacterial ribosomal protein bL35 family.

This Mycobacterium tuberculosis (strain ATCC 25177 / H37Ra) protein is Large ribosomal subunit protein bL35.